We begin with the raw amino-acid sequence, 222 residues long: Leucyl/phenylalanyl-tRNA--protein transferase (222 aa).

This sequence belongs to the L/F-transferase family.

The protein resides in the cytoplasm. It carries out the reaction N-terminal L-lysyl-[protein] + L-leucyl-tRNA(Leu) = N-terminal L-leucyl-L-lysyl-[protein] + tRNA(Leu) + H(+). The enzyme catalyses N-terminal L-arginyl-[protein] + L-leucyl-tRNA(Leu) = N-terminal L-leucyl-L-arginyl-[protein] + tRNA(Leu) + H(+). It catalyses the reaction L-phenylalanyl-tRNA(Phe) + an N-terminal L-alpha-aminoacyl-[protein] = an N-terminal L-phenylalanyl-L-alpha-aminoacyl-[protein] + tRNA(Phe). Functions in the N-end rule pathway of protein degradation where it conjugates Leu, Phe and, less efficiently, Met from aminoacyl-tRNAs to the N-termini of proteins containing an N-terminal arginine or lysine. The polypeptide is Leucyl/phenylalanyl-tRNA--protein transferase (Legionella pneumophila (strain Corby)).